Consider the following 159-residue polypeptide: Ribosomal RNA large subunit methyltransferase H (159 aa).

Residue glycine 108 coordinates S-adenosyl-L-methionine.

Belongs to the RNA methyltransferase RlmH family. As to quaternary structure, homodimer.

It is found in the cytoplasm. It carries out the reaction pseudouridine(1915) in 23S rRNA + S-adenosyl-L-methionine = N(3)-methylpseudouridine(1915) in 23S rRNA + S-adenosyl-L-homocysteine + H(+). Functionally, specifically methylates the pseudouridine at position 1915 (m3Psi1915) in 23S rRNA. The polypeptide is Ribosomal RNA large subunit methyltransferase H (Lactobacillus gasseri (strain ATCC 33323 / DSM 20243 / BCRC 14619 / CIP 102991 / JCM 1131 / KCTC 3163 / NCIMB 11718 / NCTC 13722 / AM63)).